A 692-amino-acid chain; its full sequence is UvrABC system protein B (692 aa).

The Helicase ATP-binding domain occupies Glu32 to Phe187. Residue Gly45–Thr52 coordinates ATP. The Beta-hairpin signature appears at Tyr98 to Val121. In terms of domain architecture, Helicase C-terminal spans Gln436–Ile631. The region spanning Lys656–Met691 is the UVR domain.

It belongs to the UvrB family. In terms of assembly, forms a heterotetramer with UvrA during the search for lesions. Interacts with UvrC in an incision complex.

It localises to the cytoplasm. The UvrABC repair system catalyzes the recognition and processing of DNA lesions. A damage recognition complex composed of 2 UvrA and 2 UvrB subunits scans DNA for abnormalities. Upon binding of the UvrA(2)B(2) complex to a putative damaged site, the DNA wraps around one UvrB monomer. DNA wrap is dependent on ATP binding by UvrB and probably causes local melting of the DNA helix, facilitating insertion of UvrB beta-hairpin between the DNA strands. Then UvrB probes one DNA strand for the presence of a lesion. If a lesion is found the UvrA subunits dissociate and the UvrB-DNA preincision complex is formed. This complex is subsequently bound by UvrC and the second UvrB is released. If no lesion is found, the DNA wraps around the other UvrB subunit that will check the other stand for damage. The chain is UvrABC system protein B from Lactococcus lactis subsp. cremoris (strain MG1363).